The primary structure comprises 1997 residues: Protein MOR1 (1997 aa).

2 HEAT repeats span residues 48 to 86 (DARLREFGPLFKKTVADSNAPVQEKALDALLAFQRAADA) and 164 to 202 (VVPPKKILKMLPELFDHPDQNVRASSKGLTLELCRWIGK). Residues 236–264 (RKIRSEQEKELEEEVVPEAAGTNNSEEAV) are disordered. HEAT repeat units follow at residues 321–359 (PGDFHEICRTLKKLITDVNLAVSVEATQAIGNLAKGLRT), 362–400 (SGNSRVLLPVLLEKLKEKKPTMTEALSQTLQAMHKSGCI), and 441–479 (LKLHKEYVPICMECLNDGTPEVRDASFSVLTAIAKMVGM). The segment at 501 to 576 (IGSASDTTSG…DGGPQSKASA (76 aa)) is disordered. A compositionally biased stretch (polar residues) spans 504 to 520 (ASDTTSGTVAASNTGVG). Over residues 529-539 (SSSMRRSAASM) the composition is skewed to low complexity. HEAT repeat units follow at residues 848-886 (EDISAKITPTLLKNLGSPDWKLRLESIDAVSKIVEEAHK), 890-928 (PTGTVELFTALRARLYDSNKNLVMATLSTIGGLASAMGP), 931-969 (EKSSKGILADVLKCLGDNKKHMRECTLTALDLWVAAAQL), and 1007-1045 (PSEALPLLKPSASSLMDKSSEVRKAAESFMNEILKICGQ). The disordered stretch occupies residues 1087–1115 (MSLPSKAGSKNNKHGPNDRGSNVSKAVSQ). HEAT repeat units follow at residues 1233–1259 (TTCLLKVLDFLPELFDVLKDQSYMLTE), 1260–1294 (AEAAIFLPCLMEKSGHNIEKVREKMGELIKQMVNI), 1295–1332 (YSLPKLLPYILEGLRSKNNRTRIECVDIIGYFMDHHGT), and 1334–1372 (VSGLLKNLPSVAALTAERDGEIRKAALNTLATAYKNLGD). Residues 1400-1410 (MDKRREGRPGD) are compositionally biased toward basic and acidic residues. The disordered stretch occupies residues 1400–1436 (MDKRREGRPGDARAALRRSVRENGSDIAEQSGEAVSR). The stretch at 1539-1579 (RSCKYVLNTLMQTFQIKRLAHAVKEGTLDNLITELLLWLLD) is one HEAT 14 repeat. A disordered region spans residues 1755-1776 (MGQTHWGDAGSNNPNPSTHSTD). The segment covering 1764–1776 (GSNNPNPSTHSTD) has biased composition (polar residues).

It belongs to the TOG/XMAP215 family.

It localises to the cytoplasm. It is found in the cytoskeleton. Microtubule-associated protein that is essential for cortical microtubules organization and function. This Oryza sativa subsp. japonica (Rice) protein is Protein MOR1 (MOR1).